We begin with the raw amino-acid sequence, 94 residues long: Defensin-7 (94 aa).

The first 19 residues, 1 to 19 (MRTLTLLSAFLLVALQAWA), serve as a signal peptide directing secretion. 2 disulfides stabilise this stretch: C65/C93 and C72/C92.

Belongs to the alpha-defensin family.

Its subcellular location is the secreted. In terms of biological role, has antimicrobial activity. This chain is Defensin-7 (DEFA7), found in Pan troglodytes (Chimpanzee).